Reading from the N-terminus, the 101-residue chain is MMFELVLFLSVYLFSIGIYGLITSRNMVRALICLELILNSINLNLVTFSDLFDSRQLKGDIFAIFVIALAAAEAAIGLSILSSIHRNRKSTRINQSNLLNN.

3 helical membrane passes run 2 to 22, 32 to 52, and 61 to 81; these read MFEL…YGLI, ICLE…SDLF, and IFAI…LSIL.

Belongs to the complex I subunit 4L family. As to quaternary structure, NDH is composed of at least 16 different subunits, 5 of which are encoded in the nucleus.

The protein localises to the plastid. It localises to the chloroplast thylakoid membrane. It catalyses the reaction a plastoquinone + NADH + (n+1) H(+)(in) = a plastoquinol + NAD(+) + n H(+)(out). The enzyme catalyses a plastoquinone + NADPH + (n+1) H(+)(in) = a plastoquinol + NADP(+) + n H(+)(out). Its function is as follows. NDH shuttles electrons from NAD(P)H:plastoquinone, via FMN and iron-sulfur (Fe-S) centers, to quinones in the photosynthetic chain and possibly in a chloroplast respiratory chain. The immediate electron acceptor for the enzyme in this species is believed to be plastoquinone. Couples the redox reaction to proton translocation, and thus conserves the redox energy in a proton gradient. This Lolium perenne (Perennial ryegrass) protein is NAD(P)H-quinone oxidoreductase subunit 4L, chloroplastic.